A 98-amino-acid polypeptide reads, in one-letter code: Small ribosomal subunit protein bS6 (98 aa).

This sequence belongs to the bacterial ribosomal protein bS6 family.

Functionally, binds together with bS18 to 16S ribosomal RNA. The protein is Small ribosomal subunit protein bS6 of Staphylococcus haemolyticus (strain JCSC1435).